A 32-amino-acid chain; its full sequence is Trypsin inhibitor 3 (32 aa).

Disulfide bonds link Cys6–Cys23, Cys13–Cys25, and Cys19–Cys31.

Belongs to the protease inhibitor I7 (squash-type serine protease inhibitor) family.

It localises to the secreted. Its function is as follows. Inhibits trypsin. This chain is Trypsin inhibitor 3, found in Cucurbita pepo (Vegetable marrow).